The sequence spans 220 residues: MAYRDQPLGELALSIPRASALFRKYDMDYCCGGKQTLARAAARKELDVEVIEAELAKLAEQPIEKDWRSAPLAEIIDHIIVRYHDRHREQLPELILQATKVERVHADKPSVPKGLTKYLTMLHEELSSHMMKEEQILFPMIKQGMGSQAMGPISVMESEHDEAGELLEVIKHTTNNVTPPPEACTTWKAMYNGINELIDDLMDHISLENNVLFPRALAGE.

The protein belongs to the RIC family. YtfE subfamily. In terms of assembly, homodimer.

Its subcellular location is the cytoplasm. In terms of biological role, di-iron-containing protein involved in the repair of iron-sulfur clusters damaged by oxidative and nitrosative stress conditions. The chain is Iron-sulfur cluster repair protein YtfE from Shigella boydii serotype 18 (strain CDC 3083-94 / BS512).